The following is a 668-amino-acid chain: RING finger protein 214 (668 aa).

Disordered stretches follow at residues Met-1–Glu-87 and Asn-103–Arg-125. Position 2 is an N-acetylalanine (Ala-2). Phosphoserine is present on residues Ser-15, Ser-40, Ser-48, and Ser-54. Polar residues predominate over residues Lys-43–Lys-59. Residues Glu-60 to Glu-71 are compositionally biased toward basic and acidic residues. A Phosphoserine modification is found at Ser-196. A coiled-coil region spans residues Gln-220–Thr-379. The disordered stretch occupies residues Phe-486–Val-552. Phosphoserine is present on residues Ser-497, Ser-511, and Ser-516. The segment covering Pro-523–Gly-536 has biased composition (pro residues). Residues Cys-623–Pro-665 form an RING-type; atypical zinc finger.

The chain is RING finger protein 214 (Rnf214) from Mus musculus (Mouse).